A 296-amino-acid polypeptide reads, in one-letter code: 4-hydroxy-tetrahydrodipicolinate synthase (296 aa).

Thr-49 contacts pyruvate. Tyr-137 acts as the Proton donor/acceptor in catalysis. Lys-166 serves as the catalytic Schiff-base intermediate with substrate. Ile-208 provides a ligand contact to pyruvate.

It belongs to the DapA family. In terms of assembly, homotetramer; dimer of dimers.

The protein resides in the cytoplasm. It catalyses the reaction L-aspartate 4-semialdehyde + pyruvate = (2S,4S)-4-hydroxy-2,3,4,5-tetrahydrodipicolinate + H2O + H(+). Its pathway is amino-acid biosynthesis; L-lysine biosynthesis via DAP pathway; (S)-tetrahydrodipicolinate from L-aspartate: step 3/4. Its function is as follows. Catalyzes the condensation of (S)-aspartate-beta-semialdehyde [(S)-ASA] and pyruvate to 4-hydroxy-tetrahydrodipicolinate (HTPA). This Chlorobium phaeovibrioides (strain DSM 265 / 1930) (Prosthecochloris vibrioformis (strain DSM 265)) protein is 4-hydroxy-tetrahydrodipicolinate synthase.